Reading from the N-terminus, the 209-residue chain is Uracil phosphoribosyltransferase (209 aa).

Residues R79, R104, and 131-139 (DPMLATGGS) contribute to the 5-phospho-alpha-D-ribose 1-diphosphate site. Residues I194 and 199–201 (GDA) contribute to the uracil site. D200 contacts 5-phospho-alpha-D-ribose 1-diphosphate.

Belongs to the UPRTase family. It depends on Mg(2+) as a cofactor.

It carries out the reaction UMP + diphosphate = 5-phospho-alpha-D-ribose 1-diphosphate + uracil. Its pathway is pyrimidine metabolism; UMP biosynthesis via salvage pathway; UMP from uracil: step 1/1. With respect to regulation, allosterically activated by GTP. Catalyzes the conversion of uracil and 5-phospho-alpha-D-ribose 1-diphosphate (PRPP) to UMP and diphosphate. The polypeptide is Uracil phosphoribosyltransferase (Enterococcus faecalis (strain ATCC 700802 / V583)).